The sequence spans 639 residues: Alpha-dioxygenase 1 (639 aa).

Histidine 163 acts as the Proton acceptor in catalysis. Aspartate 164 contributes to the Ca(2+) binding site. Histidine 168 serves as a coordination point for heme b. Positions 216, 218, 220, and 222 each coordinate Ca(2+). Heme b contacts are provided by histidine 389, arginine 486, and arginine 490.

This sequence belongs to the peroxidase family. Forms monomers in solution. The cofactor is heme b. Ca(2+) is required as a cofactor. In terms of tissue distribution, expressed in roots (epiderm), mature flowers (e.g. anthers) and senescing leaves.

The protein resides in the lipid droplet. It catalyses the reaction a 1,2-saturated fatty acid + O2 = a (2R)-2-hydroperoxy fatty acid. The enzyme catalyses (9Z,12Z,15Z)-octadecatrienoate + O2 = (R)-2-hydroperoxy-(9Z,12Z,15Z)-octadecatrienoate. It carries out the reaction hexadecanoate + O2 = (2R)-2-hydroperoxyhexadecanoate. The catalysed reaction is (9Z,12Z)-octadecadienoate + O2 = (2R,9Z,12Z)-2-hydroperoxyoctadecadienoate. It catalyses the reaction (9Z)-octadecenoate + O2 = (2R,9Z)-2-hydroperoxyoctadecenoate. Its function is as follows. Alpha-dioxygenase that catalyzes the primary oxygenation step of a variety of 14-20 carbon fatty acids, containing up to three unsaturated bonds, into their corresponding 2R-hydroperoxides. Involved in the production of oxylipins that function in cell signaling, wound healing, and protection from infection. Mediates protection against oxidative stress and cell death, probably by generating some lipid-derived molecules. Promotes local and systemic plant defense in a salicylic acid (SA)-dependent manner, including the establishment of systemic acquired resistance (SAR) in response to incompatible interaction. Involved in a negative regulation of abscisic acid (ABA)-mediated signaling pathway. This Arabidopsis thaliana (Mouse-ear cress) protein is Alpha-dioxygenase 1.